A 393-amino-acid polypeptide reads, in one-letter code: S-adenosylmethionine synthase (393 aa).

H16 lines the ATP pocket. A Mg(2+)-binding site is contributed by D18. E44 lines the K(+) pocket. Residues E57 and Q100 each coordinate L-methionine. The flexible loop stretch occupies residues 100 to 110; sequence QSNDIAQGVDQ. ATP-binding positions include 167–169, 238–239, D247, 253–254, A270, and K274; these read DAK, RF, and RK. Residue D247 participates in L-methionine binding. K278 contacts L-methionine.

This sequence belongs to the AdoMet synthase family. Homotetramer; dimer of dimers. It depends on Mg(2+) as a cofactor. K(+) is required as a cofactor.

The protein resides in the cytoplasm. The catalysed reaction is L-methionine + ATP + H2O = S-adenosyl-L-methionine + phosphate + diphosphate. It functions in the pathway amino-acid biosynthesis; S-adenosyl-L-methionine biosynthesis; S-adenosyl-L-methionine from L-methionine: step 1/1. Catalyzes the formation of S-adenosylmethionine (AdoMet) from methionine and ATP. The overall synthetic reaction is composed of two sequential steps, AdoMet formation and the subsequent tripolyphosphate hydrolysis which occurs prior to release of AdoMet from the enzyme. In Methylibium petroleiphilum (strain ATCC BAA-1232 / LMG 22953 / PM1), this protein is S-adenosylmethionine synthase.